The primary structure comprises 55 residues: Large ribosomal subunit protein bL33 (55 aa).

The protein belongs to the bacterial ribosomal protein bL33 family.

This is Large ribosomal subunit protein bL33 from Dinoroseobacter shibae (strain DSM 16493 / NCIMB 14021 / DFL 12).